The chain runs to 406 residues: Arginine biosynthesis bifunctional protein ArgJ (406 aa).

The substrate site is built by threonine 152, lysine 179, threonine 190, glutamate 277, asparagine 401, and serine 406. Catalysis depends on threonine 190, which acts as the Nucleophile.

It belongs to the ArgJ family. As to quaternary structure, heterotetramer of two alpha and two beta chains.

The protein localises to the cytoplasm. It carries out the reaction N(2)-acetyl-L-ornithine + L-glutamate = N-acetyl-L-glutamate + L-ornithine. It catalyses the reaction L-glutamate + acetyl-CoA = N-acetyl-L-glutamate + CoA + H(+). It functions in the pathway amino-acid biosynthesis; L-arginine biosynthesis; L-ornithine and N-acetyl-L-glutamate from L-glutamate and N(2)-acetyl-L-ornithine (cyclic): step 1/1. The protein operates within amino-acid biosynthesis; L-arginine biosynthesis; N(2)-acetyl-L-ornithine from L-glutamate: step 1/4. Functionally, catalyzes two activities which are involved in the cyclic version of arginine biosynthesis: the synthesis of N-acetylglutamate from glutamate and acetyl-CoA as the acetyl donor, and of ornithine by transacetylation between N(2)-acetylornithine and glutamate. The sequence is that of Arginine biosynthesis bifunctional protein ArgJ from Neisseria meningitidis serogroup A / serotype 4A (strain DSM 15465 / Z2491).